Reading from the N-terminus, the 181-residue chain is ADP-ribosylation factor 2-A (181 aa).

G2 carries N-myristoyl glycine lipidation. Residues 24–31 (GLDAAGKT), 67–71 (DVGGQ), and 126–129 (NKQD) contribute to the GTP site.

This sequence belongs to the small GTPase superfamily. Arf family.

It localises to the golgi apparatus. Activated by AGD10. GTP-binding protein involved in protein trafficking; may modulate vesicle budding and uncoating within the Golgi apparatus. The sequence is that of ADP-ribosylation factor 2-A (ARF2-A) from Arabidopsis thaliana (Mouse-ear cress).